The following is a 480-amino-acid chain: Glycogen synthase (480 aa).

Residue Lys-15 coordinates ADP-alpha-D-glucose.

The protein belongs to the glycosyltransferase 1 family. Bacterial/plant glycogen synthase subfamily.

It catalyses the reaction [(1-&gt;4)-alpha-D-glucosyl](n) + ADP-alpha-D-glucose = [(1-&gt;4)-alpha-D-glucosyl](n+1) + ADP + H(+). It functions in the pathway glycan biosynthesis; glycogen biosynthesis. Synthesizes alpha-1,4-glucan chains using ADP-glucose. The polypeptide is Glycogen synthase (Pasteurella multocida (strain Pm70)).